A 482-amino-acid chain; its full sequence is tRNA sulfurtransferase (482 aa).

Residues 61–165 (VQICDALTRI…QDVLILVKAR (105 aa)) enclose the THUMP domain. ATP contacts are provided by residues 183–184 (LI), lysine 265, glycine 287, and glutamine 296. A disulfide bond links cysteine 344 and cysteine 456. The Rhodanese domain maps to 404–482 (FAPTDVLLDI…GFDNVKVYRP (79 aa)). Cysteine 456 functions as the Cysteine persulfide intermediate in the catalytic mechanism.

Belongs to the ThiI family.

The protein localises to the cytoplasm. It carries out the reaction [ThiI sulfur-carrier protein]-S-sulfanyl-L-cysteine + a uridine in tRNA + 2 reduced [2Fe-2S]-[ferredoxin] + ATP + H(+) = [ThiI sulfur-carrier protein]-L-cysteine + a 4-thiouridine in tRNA + 2 oxidized [2Fe-2S]-[ferredoxin] + AMP + diphosphate. It catalyses the reaction [ThiS sulfur-carrier protein]-C-terminal Gly-Gly-AMP + S-sulfanyl-L-cysteinyl-[cysteine desulfurase] + AH2 = [ThiS sulfur-carrier protein]-C-terminal-Gly-aminoethanethioate + L-cysteinyl-[cysteine desulfurase] + A + AMP + 2 H(+). It participates in cofactor biosynthesis; thiamine diphosphate biosynthesis. In terms of biological role, catalyzes the ATP-dependent transfer of a sulfur to tRNA to produce 4-thiouridine in position 8 of tRNAs, which functions as a near-UV photosensor. Also catalyzes the transfer of sulfur to the sulfur carrier protein ThiS, forming ThiS-thiocarboxylate. This is a step in the synthesis of thiazole, in the thiamine biosynthesis pathway. The sulfur is donated as persulfide by IscS. The sequence is that of tRNA sulfurtransferase from Photorhabdus laumondii subsp. laumondii (strain DSM 15139 / CIP 105565 / TT01) (Photorhabdus luminescens subsp. laumondii).